The following is a 521-amino-acid chain: U4/U6 small nuclear ribonucleoprotein Prp4 (521 aa).

K26 is modified (N6-acetyllysine). WD repeat units lie at residues 228 to 267 (GDDRPISYCHFSPNSKMLATACWSGLCKLWSVPDCNLLHT), 270 to 317 (GHNT…PVAD), 320 to 359 (GHTVRVARVMWHPSGRFLGTTCYDRSWRLWDLEAQEEILH), 362 to 401 (GHSMGVYDIAFHQDGSLAGTGGLDAFGRVWDLRTGRCIMF), 404 to 443 (GHLKEIYGINFSPNGYHIATGSGDNTCKVWDLRQRRCVYT), 446 to 486 (AHQN…PLKT), and 489 to 521 (GHEGKVMGLDISSDGQLIATCSYDRTFKLWMAE).

Component of the precatalytic spliceosome (spliceosome B complex). Component of the U4/U6-U5 tri-snRNP complex, a building block of the precatalytic spliceosome (spliceosome B complex). The U4/U6-U5 tri-snRNP complex is composed of the U4, U6 and U5 snRNAs and at least PRPF3, PRPF4, PRPF6, PRPF8, PRPF31, SNRNP200, TXNL4A, SNRNP40, SNRPB, SNRPD1, SNRPD2, SNRPD3, SNRPE, SNRPF, SNRPG, DDX23, CD2BP2, PPIH, SNU13, EFTUD2, SART1 and USP39, plus LSM2, LSM3, LSM4, LSM5, LSM6, LSM7 and LSM8. Interacts directly with PRPF18, PPIH and PRPF3. Part of a heteromeric complex containing PPIH, PRPF3 and PRPF4 that is stable in the absence of RNA. Interacts with ERCC6.

It localises to the nucleus. The protein localises to the nucleus speckle. Plays a role in pre-mRNA splicing as component of the U4/U6-U5 tri-snRNP complex that is involved in spliceosome assembly, and as component of the precatalytic spliceosome (spliceosome B complex). The sequence is that of U4/U6 small nuclear ribonucleoprotein Prp4 (PRPF4) from Pongo abelii (Sumatran orangutan).